The following is a 289-amino-acid chain: Membrane protein insertase YidC (289 aa).

An N-terminal signal peptide occupies residues 1-19 (MKKKALLPLLLGIMVFLAG). C20 carries the N-palmitoyl cysteine lipid modification. Residue C20 is the site of S-diacylglycerol cysteine attachment. The next 5 membrane-spanning stretches (helical) occupy residues 55–75 (YGLA…PFML), 133–153 (MLGC…FFVL), 177–197 (IWIT…STFS), 210–230 (MIIS…ALGL), and 231–251 (YWSV…AYYS). Residues 268-289 (EHGGSGNSKGAKVVSKKNKKKK) form a disordered region.

It belongs to the OXA1/ALB3/YidC family. Type 2 subfamily.

It is found in the cell membrane. Required for the insertion and/or proper folding and/or complex formation of integral membrane proteins into the membrane. Involved in integration of membrane proteins that insert both dependently and independently of the Sec translocase complex, as well as at least some lipoproteins. This chain is Membrane protein insertase YidC, found in Staphylococcus carnosus (strain TM300).